Here is a 228-residue protein sequence, read N- to C-terminus: Death domain-containing membrane protein NRADD (228 aa).

The Extracellular segment spans residues 1 to 52 (MLHNVSKGVVYSDTALKGQDGDREGMWVGAGGALAPNTSSLFPPEPPGASSN). 2 N-linked (GlcNAc...) asparagine glycosylation sites follow: Asn-4 and Asn-37. The chain crosses the membrane as a helical; Signal-anchor for type III membrane protein span at residues 53–73 (IIPVYCALLATVVLGLLAYVA). Residues 74–228 (FKCWRSRKQR…SSPAEGCSVV (155 aa)) are Cytoplasmic-facing. The region spanning 143–222 (EEVQRLLILG…DVVQVLSSPA (80 aa)) is the Death domain.

Interacts with NTRK1. Isoform 1 and isoform 2 interact with NGFR. Interacts with SORT1. Post-translationally, isoform 1 is N-glycosylated. Isoform 2 is not N-glycosylated. Detected in embryo, including embryonic brain. Detected at very low levels in adult testis, spleen, thymus and lung.

Its subcellular location is the cell membrane. It localises to the nucleus. Modulates NTRK1 signaling. Can activate several intracellular signaling pathways, leading to activation of JUN. Promotes translocation of SORT1 to the cell membrane, and thereby hinders lysosomal degradation of SOTR1 and promotes its interaction with NGFR. Both isoform 1 and isoform 2 promote apoptosis. The polypeptide is Death domain-containing membrane protein NRADD (Nradd) (Rattus norvegicus (Rat)).